Consider the following 469-residue polypeptide: Ribulose bisphosphate carboxylase large chain (469 aa).

N6,N6,N6-trimethyllysine is present on Lys-5. The substrate site is built by Asn-114 and Thr-164. Lys-166 acts as the Proton acceptor in catalysis. Lys-168 serves as a coordination point for substrate. Mg(2+)-binding residues include Lys-192, Asp-194, and Glu-195. Lys-192 carries the N6-carboxylysine modification. Catalysis depends on His-285, which acts as the Proton acceptor. The substrate site is built by Arg-286, His-318, and Ser-370.

The protein belongs to the RuBisCO large chain family. Type I subfamily. In terms of assembly, heterohexadecamer of 8 large chains and 8 small chains; disulfide-linked. The disulfide link is formed within the large subunit homodimers. Requires Mg(2+) as cofactor. The disulfide bond which can form in the large chain dimeric partners within the hexadecamer appears to be associated with oxidative stress and protein turnover.

The protein localises to the plastid. The protein resides in the chloroplast. It catalyses the reaction 2 (2R)-3-phosphoglycerate + 2 H(+) = D-ribulose 1,5-bisphosphate + CO2 + H2O. The catalysed reaction is D-ribulose 1,5-bisphosphate + O2 = 2-phosphoglycolate + (2R)-3-phosphoglycerate + 2 H(+). RuBisCO catalyzes two reactions: the carboxylation of D-ribulose 1,5-bisphosphate, the primary event in carbon dioxide fixation, as well as the oxidative fragmentation of the pentose substrate in the photorespiration process. Both reactions occur simultaneously and in competition at the same active site. The protein is Ribulose bisphosphate carboxylase large chain of Calycophyllum candidissimum (Degame lemonwood tree).